The primary structure comprises 180 residues: Homeobox protein ceh-12 (180 aa).

Residues 15–37 (SSQNEDQKLESHPSPPSQIPNYS) form a disordered region. Residues 110 to 169 (MRRPRTAFSSEQLVQLEKQFSDNRYLSRPRRYQLAQQLSLSETQIKIWFQNRRMKNKRCP) constitute a DNA-binding region (homeobox).

In terms of tissue distribution, expressed in VB motor neurons in the ventral nerve cord.

The protein localises to the nucleus. In terms of biological role, transcription factor. Plays a role, downstream from homeobox protein unc-4 and Wnt signaling, in specifying synaptic inputs to A-class motor neurons. Involved in patterning of the synaptic outputs of the postmitotic DA class cholinergic motor neurons. The protein is Homeobox protein ceh-12 (ceh-12) of Caenorhabditis elegans.